The chain runs to 268 residues: ELL-associated factor 1 (268 aa).

The disordered stretch occupies residues 106 to 268 (IQVKKTRAEG…LSESGSDSDD (163 aa)). Residues 128 to 154 (TRPPQTSQPPPPPPPMPFRAPTKPPVG) are compositionally biased toward pro residues. Residue serine 165 is modified to Phosphoserine. Over residues 171–181 (DDIKRELRAEV) the composition is skewed to basic and acidic residues. Positions 182-262 (DIIEQMSSSS…LRNDLQLSES (81 aa)) are necessary for transactivation activity. Over residues 188–213 (SSSSGSSSSDSESSSGSDDDSSSSGG) the composition is skewed to low complexity. Over residues 238–268 (NGTSRPQGSNQLMNTLRNDLQLSESGSDSDD) the composition is skewed to polar residues.

The protein belongs to the EAF family. In terms of assembly, component of the super elongation complex (SEC), at least composed of EAF1, EAF2, CDK9, MLLT3/AF9, AFF (AFF1 or AFF4), the P-TEFb complex and ELL (ELL, ELL2 or ELL3). Interacts with ELL and ELL2. Strongly expressed in heart, brain, placenta, lung, liver, skeletal muscle, kidney, pancreas, spleen, prostate, testis, small intestine and colon. Poorly expressed in thymus.

It localises to the nucleus speckle. The protein resides in the nucleus. The protein localises to the cajal body. Functionally, acts as a transcriptional transactivator of ELL and ELL2 elongation activities. The chain is ELL-associated factor 1 (EAF1) from Homo sapiens (Human).